The primary structure comprises 171 residues: ATP synthase subunit b (171 aa).

Residues 2–22 traverse the membrane as a helical segment; that stretch reads FLVKMVLGFLIFLSPLCATGL.

This sequence belongs to the ATPase B chain family. F-type ATPases have 2 components, F(1) - the catalytic core - and F(0) - the membrane proton channel. F(1) has five subunits: alpha(3), beta(3), gamma(1), delta(1), epsilon(1). F(0) has three main subunits: a(1), b(2) and c(10-14). The alpha and beta chains form an alternating ring which encloses part of the gamma chain. F(1) is attached to F(0) by a central stalk formed by the gamma and epsilon chains, while a peripheral stalk is formed by the delta and b chains.

It is found in the cell inner membrane. F(1)F(0) ATP synthase produces ATP from ADP in the presence of a proton or sodium gradient. F-type ATPases consist of two structural domains, F(1) containing the extramembraneous catalytic core and F(0) containing the membrane proton channel, linked together by a central stalk and a peripheral stalk. During catalysis, ATP synthesis in the catalytic domain of F(1) is coupled via a rotary mechanism of the central stalk subunits to proton translocation. Its function is as follows. Component of the F(0) channel, it forms part of the peripheral stalk, linking F(1) to F(0). This is ATP synthase subunit b from Helicobacter pylori (strain Shi470).